The sequence spans 233 residues: 7-cyano-7-deazaguanine synthase (233 aa).

Residue 11–21 (FSGGQDSTTCL) coordinates ATP. Zn(2+) contacts are provided by cysteine 199, cysteine 214, cysteine 217, and cysteine 220.

The protein belongs to the QueC family. The cofactor is Zn(2+).

The catalysed reaction is 7-carboxy-7-deazaguanine + NH4(+) + ATP = 7-cyano-7-deazaguanine + ADP + phosphate + H2O + H(+). It functions in the pathway purine metabolism; 7-cyano-7-deazaguanine biosynthesis. Catalyzes the ATP-dependent conversion of 7-carboxy-7-deazaguanine (CDG) to 7-cyano-7-deazaguanine (preQ(0)). The protein is 7-cyano-7-deazaguanine synthase of Herminiimonas arsenicoxydans.